The sequence spans 313 residues: Curved DNA-binding protein (313 aa).

The J domain maps to aspartate 5–glycine 69. The tract at residues glycine 71–valine 93 is disordered.

It is found in the cytoplasm. The protein localises to the nucleoid. DNA-binding protein that preferentially recognizes a curved DNA sequence. It is probably a functional analog of DnaJ; displays overlapping activities with DnaJ, but functions under different conditions, probably acting as a molecular chaperone in an adaptive response to environmental stresses other than heat shock. Lacks autonomous chaperone activity; binds native substrates and targets them for recognition by DnaK. Its activity is inhibited by the binding of CbpM. The sequence is that of Curved DNA-binding protein from Coxiella burnetii (strain Dugway 5J108-111).